A 350-amino-acid chain; its full sequence is Protein RecA (350 aa).

Residue 66-73 (GPESSGKT) coordinates ATP.

This sequence belongs to the RecA family.

It localises to the cytoplasm. Functionally, can catalyze the hydrolysis of ATP in the presence of single-stranded DNA, the ATP-dependent uptake of single-stranded DNA by duplex DNA, and the ATP-dependent hybridization of homologous single-stranded DNAs. It interacts with LexA causing its activation and leading to its autocatalytic cleavage. This is Protein RecA from Nocardioides sp. (strain ATCC BAA-499 / JS614).